A 97-amino-acid polypeptide reads, in one-letter code: Antiholin (97 aa).

The signal sequence occupies residues 1-24 (MALKATALFAMLGLSFVLSPSIEA). The cysteines at positions 69 and 75 are disulfide-linked.

Belongs to the T4likevirus antiholin family. As to quaternary structure, homotetramer; in free-form. Homomultimer. Heterotetramer composed of 2 holin and 2 antiholin. The holin-antiholin complex binds dsDNA. Interacts (via C-terminus) with holin (via C-terminus); this interaction blocks the holin homomultimerization and delays the host cell lysis. Disulfide bond is required for functionality.

The protein localises to the host periplasm. In terms of biological role, involved in lysis inhibition. Senses superinfections and inhibits the holin, thereby delaying the host cell lysis timing. The genomic DNA from the superinfecting phage bound to the complex holin-antiholin probably serves as a signal for the lysis inhibition and blocks the holin multimerization. The polypeptide is Antiholin (rI) (Enterobacteria phage T4 (Bacteriophage T4)).